Here is a 367-residue protein sequence, read N- to C-terminus: MARKYFQREVLPVTALVIMECANVGLNTLFKAATLKGMSFHVFIVYSYGLAALLLLPSLFCSFRSRTLPPMNFSILYKIVLLGIIGCCSNIMGYTGINYSSPTLASAISNLTPAFTFLLAVVFRMESVSFKRTSSVAKMLGTVVSIGGAFIVTLYNGPVVIAKSPPSVSLRSQSTNPNWILGAGFLAVEYFCVPLWYIVQTQIMREYPAEFTVVCFYSIGVSFWTALVTLFTEGNDLGAWKIKPNIALVSIVCSGLFGSCINNTIHTWALRIKGPLFVAMFKPLSIAIAVAMGVIFLRDSLYIGSLIGATVITIGFYTVMWGKAKEVALVEDDNKANHEEANEADLDSPSGSQKAPLLESYKNDEHV.

Helical transmembrane passes span 10-30 (VLPV…NTLF), 40-60 (FHVF…PSLF), 73-93 (FSIL…NIMG), 103-123 (TLAS…AVVF), 142-162 (TVVS…VVIA), 179-199 (WILG…WYIV), 211-231 (FTVV…VTLF), 246-266 (IALV…NTIH), 276-296 (LFVA…GVIF), and 301-321 (LYIG…TVMW). EamA domains are found at residues 25 to 153 (GLNT…FIVT) and 195 to 319 (LWYI…FYTV). Residues 338 to 367 (HEEANEADLDSPSGSQKAPLLESYKNDEHV) form a disordered region.

Belongs to the drug/metabolite transporter (DMT) superfamily. Plant drug/metabolite exporter (P-DME) (TC 2.A.7.4) family.

Its subcellular location is the membrane. The polypeptide is WAT1-related protein At3g28050 (Arabidopsis thaliana (Mouse-ear cress)).